The chain runs to 862 residues: Leucine--tRNA ligase (862 aa).

The 'HIGH' region signature appears at 44 to 54; it reads PYPSGRIHMGH. Residues 622 to 626 carry the 'KMSKS' region motif; it reads KMSKS. Lysine 625 contributes to the ATP binding site.

The protein belongs to the class-I aminoacyl-tRNA synthetase family.

The protein localises to the cytoplasm. It catalyses the reaction tRNA(Leu) + L-leucine + ATP = L-leucyl-tRNA(Leu) + AMP + diphosphate. This is Leucine--tRNA ligase from Rhodospirillum rubrum (strain ATCC 11170 / ATH 1.1.1 / DSM 467 / LMG 4362 / NCIMB 8255 / S1).